Consider the following 704-residue polypeptide: Elongation factor G (704 aa).

The region spanning 6-282 (NKVRNIGIMA…AVIDYLPTPL (277 aa)) is the tr-type G domain. Residues 15 to 22 (AHIDAGKT), 79 to 83 (DTPGH), and 133 to 136 (NKMD) contribute to the GTP site.

It belongs to the TRAFAC class translation factor GTPase superfamily. Classic translation factor GTPase family. EF-G/EF-2 subfamily.

The protein localises to the cytoplasm. Functionally, catalyzes the GTP-dependent ribosomal translocation step during translation elongation. During this step, the ribosome changes from the pre-translocational (PRE) to the post-translocational (POST) state as the newly formed A-site-bound peptidyl-tRNA and P-site-bound deacylated tRNA move to the P and E sites, respectively. Catalyzes the coordinated movement of the two tRNA molecules, the mRNA and conformational changes in the ribosome. In Corynebacterium diphtheriae (strain ATCC 700971 / NCTC 13129 / Biotype gravis), this protein is Elongation factor G.